A 172-amino-acid chain; its full sequence is MRALIIGRWQPFHNGHLSIIKEISNEVDEIIIGIGSAQKSHSLDNPFTAGERIMMIIKSLKKYNFPYYVIPIKDIEFNAVWVSYVEALTPPFDIVYSGNALVKELFEEKGYEVRKPKLYNRTEYSGTEIRKRIINNEDWKHLIPNGVINVIDEIDGENRIKRLNMKDYDIIE.

Belongs to the archaeal NMN adenylyltransferase family.

The protein resides in the cytoplasm. The catalysed reaction is beta-nicotinamide D-ribonucleotide + ATP + H(+) = diphosphate + NAD(+). The protein operates within cofactor biosynthesis; NAD(+) biosynthesis; NAD(+) from nicotinamide D-ribonucleotide: step 1/1. The protein is Nicotinamide-nucleotide adenylyltransferase of Methanococcus aeolicus (strain ATCC BAA-1280 / DSM 17508 / OCM 812 / Nankai-3).